Here is a 486-residue protein sequence, read N- to C-terminus: UDP-N-acetylmuramate--L-alanine ligase (486 aa).

Residue 126–132 (GTHGKTT) coordinates ATP.

The protein belongs to the MurCDEF family.

It localises to the cytoplasm. It catalyses the reaction UDP-N-acetyl-alpha-D-muramate + L-alanine + ATP = UDP-N-acetyl-alpha-D-muramoyl-L-alanine + ADP + phosphate + H(+). It functions in the pathway cell wall biogenesis; peptidoglycan biosynthesis. In terms of biological role, cell wall formation. This Pectobacterium carotovorum subsp. carotovorum (strain PC1) protein is UDP-N-acetylmuramate--L-alanine ligase.